Here is an 88-residue protein sequence, read N- to C-terminus: L-amino-acid oxidase (88 aa).

FAD-binding positions include Glu-74 and 81 to 86 (GWIDST). 81–82 (GW) serves as a coordination point for substrate.

This sequence belongs to the flavin monoamine oxidase family. FIG1 subfamily. Homodimer; non-covalently linked. Requires FAD as cofactor. In terms of processing, N-glycosylated. Expressed by the venom gland.

The protein localises to the secreted. The catalysed reaction is an L-alpha-amino acid + O2 + H2O = a 2-oxocarboxylate + H2O2 + NH4(+). It carries out the reaction L-leucine + O2 + H2O = 4-methyl-2-oxopentanoate + H2O2 + NH4(+). The enzyme catalyses L-phenylalanine + O2 + H2O = 3-phenylpyruvate + H2O2 + NH4(+). It catalyses the reaction L-tryptophan + O2 + H2O = indole-3-pyruvate + H2O2 + NH4(+). The catalysed reaction is L-methionine + O2 + H2O = 4-methylsulfanyl-2-oxobutanoate + H2O2 + NH4(+). It carries out the reaction L-isoleucine + O2 + H2O = (S)-3-methyl-2-oxopentanoate + H2O2 + NH4(+). The enzyme catalyses L-arginine + O2 + H2O = 5-guanidino-2-oxopentanoate + H2O2 + NH4(+). It catalyses the reaction L-histidine + O2 + H2O = 3-(imidazol-5-yl)pyruvate + H2O2 + NH4(+). The catalysed reaction is L-asparagine + O2 + H2O = 2-oxosuccinamate + H2O2 + NH4(+). It carries out the reaction L-valine + O2 + H2O = 3-methyl-2-oxobutanoate + H2O2 + NH4(+). The enzyme catalyses L-glutamate + O2 + H2O = H2O2 + 2-oxoglutarate + NH4(+). In terms of biological role, catalyzes an oxidative deamination of predominantly hydrophobic and aromatic L-amino acids, thus producing hydrogen peroxide that may contribute to the diverse toxic effects of this enzyme. Is highly active on L-Met, L-Leu, L-Phe, L-Ile, and L-Arg, moderately active on L-His, L-Trp, L-Asn, L-Glu, and L-Val, and weakly or not active on L-Gln, L-Lys, L-Asp, L-Ala, L-Tyr, L-Ser, L-Pro, L-Gly, L-Thr, and L-Cys. Exhibits diverse biological activities, such as hemorrhage, hemolysis, edema, apoptosis of vascular endothelial cells or tumor cell lines, antibacterial and antiparasitic activities. In addition, this protein has an ability to induce apoptosis in cultured HeLa and K562 cells, and inhibits ADP-induced platelet aggregation dose-dependently. Effects of snake L-amino oxidases on platelets are controversial, since they either induce aggregation or inhibit agonist-induced aggregation. These different effects are probably due to different experimental conditions. This Vipera berus berus (Common viper) protein is L-amino-acid oxidase.